The following is a 61-amino-acid chain: Putative antitoxin VapB21 (61 aa).

Belongs to the UPF0165 family.

Its function is as follows. Possibly the antitoxin component of a type II toxin-antitoxin (TA) system. Its cognate toxin is VapC21 (Potential). This is Putative antitoxin VapB21 (vapB21) from Archaeoglobus fulgidus (strain ATCC 49558 / DSM 4304 / JCM 9628 / NBRC 100126 / VC-16).